The chain runs to 520 residues: 3-phosphoshikimate 1-carboxyvinyltransferase, chloroplastic (520 aa).

Residues M1 to E76 constitute a chloroplast transit peptide. The 3-phosphoshikimate site is built by K99, S100, and R104. A phosphoenolpyruvate-binding site is contributed by K99. The phosphoenolpyruvate site is built by G177 and R207. S254, S255, Q256, S282, D407, and K434 together coordinate 3-phosphoshikimate. Q256 provides a ligand contact to phosphoenolpyruvate. The Proton acceptor role is filled by D407. Residues R438, R480, and K505 each contribute to the phosphoenolpyruvate site.

The protein belongs to the EPSP synthase family.

The protein resides in the plastid. Its subcellular location is the chloroplast. The enzyme catalyses 3-phosphoshikimate + phosphoenolpyruvate = 5-O-(1-carboxyvinyl)-3-phosphoshikimate + phosphate. It functions in the pathway metabolic intermediate biosynthesis; chorismate biosynthesis; chorismate from D-erythrose 4-phosphate and phosphoenolpyruvate: step 6/7. Functionally, catalyzes the transfer of the enolpyruvyl moiety of phosphoenolpyruvate (PEP) to the 5-hydroxyl of shikimate-3-phosphate (S3P) to produce enolpyruvyl shikimate-3-phosphate and inorganic phosphate. The protein is 3-phosphoshikimate 1-carboxyvinyltransferase, chloroplastic of Solanum lycopersicum (Tomato).